Reading from the N-terminus, the 1034-residue chain is Protein ITPRID1 (1034 aa).

Disordered regions lie at residues 223–290, 442–486, and 624–678; these read KTQQ…PTKP, QVSS…KSMT, and QSSL…SSWS. Polar residues-rich tracts occupy residues 443 to 453 and 465 to 476; these read VSSMTGSQSPT and HSPASQQDSLQE. The span at 477 to 486 shows a compositional bias: low complexity; sequence SYGSKSKSMT. Over residues 669–678 the composition is skewed to polar residues; the sequence is TDSNAASSWS. A coiled-coil region spans residues 843–902; sequence EMETMKMVCQSFREHLEEIEQHFMGQQALYPRDMSEEEREEAEYLRTLREALRQQVAELA.

This Mus musculus (Mouse) protein is Protein ITPRID1 (Itprid1).